The following is a 446-amino-acid chain: CBL-interacting protein kinase 8 (446 aa).

Positions 13-266 (YEVGRTIGEG…IEEIRNDEWF (254 aa)) constitute a Protein kinase domain. Residues 19–27 (IGEGTFAKV) and Lys42 each bind ATP. Asp136 serves as the catalytic Proton acceptor. The activation loop stretch occupies residues 154–181 (DFGLSAWPAQGGALLRTTCGTPNYVAPE). The 29-residue stretch at 301–329 (LDDEAGPLTLNAFDLIILSQGLNLAALFD) folds into the NAF domain. Residues 336 to 365 (KLQNRFLSRKPAKVIMSSMEVVAQSMGYKT) are PPI.

It belongs to the protein kinase superfamily. CAMK Ser/Thr protein kinase family. SNF1 subfamily. The cofactor is Mn(2+).

The catalysed reaction is L-seryl-[protein] + ATP = O-phospho-L-seryl-[protein] + ADP + H(+). It carries out the reaction L-threonyl-[protein] + ATP = O-phospho-L-threonyl-[protein] + ADP + H(+). In terms of biological role, CIPK serine-threonine protein kinases interact with CBL proteins. Binding of a CBL protein to the regulatory NAF domain of CIPK protein lead to the activation of the kinase in a calcium-dependent manner. This chain is CBL-interacting protein kinase 8 (CIPK8), found in Oryza sativa subsp. japonica (Rice).